A 207-amino-acid polypeptide reads, in one-letter code: 2,3-bisphosphoglycerate-dependent phosphoglycerate mutase (207 aa).

Substrate is bound by residues 10–17 (RHGQSEWN), 23–24 (TG), R62, 89–92 (ERDY), K100, 116–117 (RR), and 160–161 (GN). The active-site Tele-phosphohistidine intermediate is H11. The active-site Proton donor/acceptor is E89.

It belongs to the phosphoglycerate mutase family. BPG-dependent PGAM subfamily. As to quaternary structure, homodimer.

It catalyses the reaction (2R)-2-phosphoglycerate = (2R)-3-phosphoglycerate. Its pathway is carbohydrate degradation; glycolysis; pyruvate from D-glyceraldehyde 3-phosphate: step 3/5. In terms of biological role, catalyzes the interconversion of 2-phosphoglycerate and 3-phosphoglycerate. The sequence is that of 2,3-bisphosphoglycerate-dependent phosphoglycerate mutase from Bradyrhizobium sp. (strain BTAi1 / ATCC BAA-1182).